The sequence spans 301 residues: Oxygen-dependent coproporphyrinogen-III oxidase (301 aa).

S90 contacts substrate. A divalent metal cation-binding residues include H94 and H104. Catalysis depends on H104, which acts as the Proton donor. Position 106-108 (106-108 (NVR)) interacts with substrate. A divalent metal cation-binding residues include H143 and H173. The important for dimerization stretch occupies residues 238 to 273 (YVEFNLVWDRGTLFGLQSGGRTESILMSLPPVVKWR). Residue 256-258 (GGR) participates in substrate binding.

It belongs to the aerobic coproporphyrinogen-III oxidase family. In terms of assembly, homodimer. A divalent metal cation serves as cofactor.

It localises to the cytoplasm. The enzyme catalyses coproporphyrinogen III + O2 + 2 H(+) = protoporphyrinogen IX + 2 CO2 + 2 H2O. It functions in the pathway porphyrin-containing compound metabolism; protoporphyrin-IX biosynthesis; protoporphyrinogen-IX from coproporphyrinogen-III (O2 route): step 1/1. Functionally, involved in the heme biosynthesis. Catalyzes the aerobic oxidative decarboxylation of propionate groups of rings A and B of coproporphyrinogen-III to yield the vinyl groups in protoporphyrinogen-IX. This is Oxygen-dependent coproporphyrinogen-III oxidase from Nitrosomonas europaea (strain ATCC 19718 / CIP 103999 / KCTC 2705 / NBRC 14298).